Consider the following 470-residue polypeptide: Phosphoribosylamine--glycine ligase (470 aa).

The region spanning 115–354 is the ATP-grasp domain; sequence KDFLKRIGVP…MAEISMAVVE (240 aa). Residue 142–203 coordinates ATP; it reads REKFNNGIVV…EERLRGIEVA (62 aa). Positions 324 and 326 each coordinate Mg(2+).

The protein belongs to the GARS family. Mg(2+) is required as a cofactor. Requires Mn(2+) as cofactor.

It catalyses the reaction 5-phospho-beta-D-ribosylamine + glycine + ATP = N(1)-(5-phospho-beta-D-ribosyl)glycinamide + ADP + phosphate + H(+). It participates in purine metabolism; IMP biosynthesis via de novo pathway; N(1)-(5-phospho-D-ribosyl)glycinamide from 5-phospho-alpha-D-ribose 1-diphosphate: step 2/2. In Archaeoglobus fulgidus (strain ATCC 49558 / DSM 4304 / JCM 9628 / NBRC 100126 / VC-16), this protein is Phosphoribosylamine--glycine ligase (purD).